The primary structure comprises 735 residues: Photosystem I P700 chlorophyll a apoprotein A2 (735 aa).

Helical transmembrane passes span isoleucine 47–alanine 70, leucine 136–glutamine 159, leucine 176–isoleucine 200, methionine 274–tyrosine 292, leucine 331–tyrosine 354, alanine 370–isoleucine 396, alanine 418–histidine 440, and phenylalanine 518–valine 536. The [4Fe-4S] cluster site is built by cysteine 560 and cysteine 569. 2 consecutive transmembrane segments (helical) span residues alanine 576–tryptophan 597 and leucine 644–isoleucine 666. Histidine 655, methionine 663, and tyrosine 671 together coordinate chlorophyll a. Tryptophan 672 lines the phylloquinone pocket. The chain crosses the membrane as a helical span at residues leucine 708 to alanine 728.

The protein belongs to the PsaA/PsaB family. In terms of assembly, the PsaA/B heterodimer binds the P700 chlorophyll special pair and subsequent electron acceptors. PSI consists of a core antenna complex that captures photons, and an electron transfer chain that converts photonic excitation into a charge separation. The eukaryotic PSI reaction center is composed of at least 11 subunits. P700 is a chlorophyll a/chlorophyll a' dimer, A0 is one or more chlorophyll a, A1 is one or both phylloquinones and FX is a shared 4Fe-4S iron-sulfur center. serves as cofactor.

It is found in the plastid. It localises to the chloroplast thylakoid membrane. It carries out the reaction reduced [plastocyanin] + hnu + oxidized [2Fe-2S]-[ferredoxin] = oxidized [plastocyanin] + reduced [2Fe-2S]-[ferredoxin]. In terms of biological role, psaA and PsaB bind P700, the primary electron donor of photosystem I (PSI), as well as the electron acceptors A0, A1 and FX. PSI is a plastocyanin/cytochrome c6-ferredoxin oxidoreductase, converting photonic excitation into a charge separation, which transfers an electron from the donor P700 chlorophyll pair to the spectroscopically characterized acceptors A0, A1, FX, FA and FB in turn. Oxidized P700 is reduced on the lumenal side of the thylakoid membrane by plastocyanin or cytochrome c6. In Tetradesmus obliquus (Green alga), this protein is Photosystem I P700 chlorophyll a apoprotein A2.